Consider the following 220-residue polypeptide: Glycerol-3-phosphate acyltransferase (220 aa).

6 consecutive transmembrane segments (helical) span residues 11–31, 70–90, 96–116, 127–147, 153–173, and 193–213; these read INVI…GYAL, LLVL…SKLF, LQWM…FLNF, GSVV…WFFV, ISSL…FFVP, and MVLI…NLLA.

It belongs to the PlsY family. In terms of assembly, probably interacts with PlsX.

Its subcellular location is the cell inner membrane. It carries out the reaction an acyl phosphate + sn-glycerol 3-phosphate = a 1-acyl-sn-glycero-3-phosphate + phosphate. It functions in the pathway lipid metabolism; phospholipid metabolism. Catalyzes the transfer of an acyl group from acyl-phosphate (acyl-PO(4)) to glycerol-3-phosphate (G3P) to form lysophosphatidic acid (LPA). This enzyme utilizes acyl-phosphate as fatty acyl donor, but not acyl-CoA or acyl-ACP. The polypeptide is Glycerol-3-phosphate acyltransferase (Helicobacter pylori (strain ATCC 700392 / 26695) (Campylobacter pylori)).